The chain runs to 293 residues: uncharacterized protein (293 aa).

Catalysis depends on charge relay system residues Thr43 and Tyr105. Tyr131 functions as the Proton donor in the catalytic mechanism. The active-site Schiff-base intermediate with substrate is Lys159.

Belongs to the DapA family. In terms of assembly, homotetramer.

The protein localises to the cytoplasm. This is an uncharacterized protein from Thermococcus onnurineus (strain NA1).